We begin with the raw amino-acid sequence, 224 residues long: Flagellar L-ring protein (224 aa).

The first 15 residues, 1-15, serve as a signal peptide directing secretion; it reads MRSLLFSLTALVLAG. Cysteine 16 carries N-palmitoyl cysteine lipidation. Cysteine 16 carries S-diacylglycerol cysteine lipidation.

The protein belongs to the FlgH family. In terms of assembly, the basal body constitutes a major portion of the flagellar organelle and consists of four rings (L,P,S, and M) mounted on a central rod.

It is found in the cell outer membrane. Its subcellular location is the bacterial flagellum basal body. In terms of biological role, assembles around the rod to form the L-ring and probably protects the motor/basal body from shearing forces during rotation. In Idiomarina loihiensis (strain ATCC BAA-735 / DSM 15497 / L2-TR), this protein is Flagellar L-ring protein.